The following is a 189-amino-acid chain: Threonylcarbamoyl-AMP synthase (189 aa).

The YrdC-like domain maps to 9–189; sequence ASAQRKLSVY…IDGETGKRLR (181 aa).

The protein belongs to the SUA5 family. TsaC subfamily.

It is found in the cytoplasm. It carries out the reaction L-threonine + hydrogencarbonate + ATP = L-threonylcarbamoyladenylate + diphosphate + H2O. In terms of biological role, required for the formation of a threonylcarbamoyl group on adenosine at position 37 (t(6)A37) in tRNAs that read codons beginning with adenine. Catalyzes the conversion of L-threonine, HCO(3)(-)/CO(2) and ATP to give threonylcarbamoyl-AMP (TC-AMP) as the acyladenylate intermediate, with the release of diphosphate. This is Threonylcarbamoyl-AMP synthase from Neisseria meningitidis serogroup C (strain 053442).